Consider the following 81-residue polypeptide: Trefoil factor 3 (81 aa).

The first 22 residues, 1 to 22, serve as a signal peptide directing secretion; sequence METRALWLMLLVVLVAGSSGIA. The P-type domain occupies 31–74; sequence SQCMVPANVRVDCGYPSVTSEQCNNRGCCFDSSIPNVPWCFKPL. Disulfide bonds link C33-C59, C43-C58, and C53-C70.

Monomer. Homodimer; disulfide-linked. Expressed in goblet cells of the intestines and colon (at protein level). Expressed abundantly in goblet cells of intestine and colon, and at low levels in stomach. No expression in brain, lung, spleen, kidney, uterus, pancreas, liver, heart or thymus.

The protein resides in the secreted. The protein localises to the extracellular space. It is found in the extracellular matrix. It localises to the cytoplasm. Involved in the maintenance and repair of the intestinal mucosa. Promotes the mobility of epithelial cells in healing processes (motogen). This Mus musculus (Mouse) protein is Trefoil factor 3 (Tff3).